The primary structure comprises 164 residues: uncharacterized protein (164 aa).

A run of 4 helical transmembrane segments spans residues Gln25–Gly45, Gly63–Val83, Phe120–Phe140, and Thr141–Met161.

The protein belongs to the major facilitator superfamily.

It localises to the cell membrane. This is an uncharacterized protein from Bacillus subtilis (strain 168).